The chain runs to 673 residues: Thimet-like oligopeptidase (673 aa).

H465 contributes to the Zn(2+) binding site. Residue E466 is part of the active site. Residues H469 and H472 each contribute to the Zn(2+) site.

It belongs to the peptidase M3 family. The cofactor is Zn(2+).

This is Thimet-like oligopeptidase from Dictyostelium discoideum (Social amoeba).